Consider the following 457-residue polypeptide: Siroheme synthase (457 aa).

Positions 1-204 are precorrin-2 dehydrogenase /sirohydrochlorin ferrochelatase; sequence MDHLPIFCQL…ADEKAVNATT (204 aa). Residues 22–23 and 43–44 contribute to the NAD(+) site; these read DV and LT. Residue Ser128 is modified to Phosphoserine. The tract at residues 216–457 is uroporphyrinogen-III C-methyltransferase; the sequence is GEVVLVGAGP…RDKLNWFSSH (242 aa). Pro225 lines the S-adenosyl-L-methionine pocket. The Proton acceptor role is filled by Asp248. Lys270 serves as the catalytic Proton donor. S-adenosyl-L-methionine is bound by residues 301–303, Ile306, 331–332, Met382, and Gly411; these read GGD and TA.

It in the N-terminal section; belongs to the precorrin-2 dehydrogenase / sirohydrochlorin ferrochelatase family. The protein in the C-terminal section; belongs to the precorrin methyltransferase family.

The enzyme catalyses uroporphyrinogen III + 2 S-adenosyl-L-methionine = precorrin-2 + 2 S-adenosyl-L-homocysteine + H(+). The catalysed reaction is precorrin-2 + NAD(+) = sirohydrochlorin + NADH + 2 H(+). It carries out the reaction siroheme + 2 H(+) = sirohydrochlorin + Fe(2+). It participates in cofactor biosynthesis; adenosylcobalamin biosynthesis; precorrin-2 from uroporphyrinogen III: step 1/1. The protein operates within cofactor biosynthesis; adenosylcobalamin biosynthesis; sirohydrochlorin from precorrin-2: step 1/1. Its pathway is porphyrin-containing compound metabolism; siroheme biosynthesis; precorrin-2 from uroporphyrinogen III: step 1/1. It functions in the pathway porphyrin-containing compound metabolism; siroheme biosynthesis; siroheme from sirohydrochlorin: step 1/1. It participates in porphyrin-containing compound metabolism; siroheme biosynthesis; sirohydrochlorin from precorrin-2: step 1/1. Functionally, multifunctional enzyme that catalyzes the SAM-dependent methylations of uroporphyrinogen III at position C-2 and C-7 to form precorrin-2 via precorrin-1. Then it catalyzes the NAD-dependent ring dehydrogenation of precorrin-2 to yield sirohydrochlorin. Finally, it catalyzes the ferrochelation of sirohydrochlorin to yield siroheme. In Salmonella arizonae (strain ATCC BAA-731 / CDC346-86 / RSK2980), this protein is Siroheme synthase.